The primary structure comprises 186 residues: Ribosome-recycling factor (186 aa).

It belongs to the RRF family.

It is found in the cytoplasm. Functionally, responsible for the release of ribosomes from messenger RNA at the termination of protein biosynthesis. May increase the efficiency of translation by recycling ribosomes from one round of translation to another. In Polaromonas sp. (strain JS666 / ATCC BAA-500), this protein is Ribosome-recycling factor.